The following is a 384-amino-acid chain: Putative glutamate--cysteine ligase 2 (384 aa).

It belongs to the glutamate--cysteine ligase type 2 family. YbdK subfamily.

The enzyme catalyses L-cysteine + L-glutamate + ATP = gamma-L-glutamyl-L-cysteine + ADP + phosphate + H(+). In terms of biological role, ATP-dependent carboxylate-amine ligase which exhibits weak glutamate--cysteine ligase activity. The chain is Putative glutamate--cysteine ligase 2 from Dechloromonas aromatica (strain RCB).